We begin with the raw amino-acid sequence, 245 residues long: Carboxymethylenebutenolidase homolog (245 aa).

Alanine 2 carries the post-translational modification N-acetylalanine. Active-site residues include cysteine 132, aspartate 179, and histidine 212. Serine 223 bears the Phosphoserine mark.

The protein belongs to the dienelactone hydrolase family.

It localises to the cytoplasm. The protein resides in the cytosol. Its function is as follows. Cysteine hydrolase. In Rattus norvegicus (Rat), this protein is Carboxymethylenebutenolidase homolog (Cmbl).